Consider the following 342-residue polypeptide: Ubiquitin fusion degradation protein 1 homolog (342 aa).

Disordered stretches follow at residues 245 to 276 and 318 to 342; these read FGGA…SNAA and EKEA…RGAR. The span at 259-275 shows a compositional bias: polar residues; it reads SSSVSLSDGTGVSTSNA.

It belongs to the UFD1 family. In terms of assembly, forms a complex composed of ubxn-3, ufd-1, npl-4.1 and cdc-48.1; within the complex interacts with cdc-48.1. Interacts with cdc-48.2. Interacts with npl-4.1 and/or npl-4.2.

The protein localises to the cytoplasm. The protein resides in the nucleus. Its function is as follows. Functions at a post-ubiquitination step in the ubiquitin fusion degradation (UFD) pathway. In association with npl-4.1 and/or npl-4.2 and ATPase cdc-48.1 and/or cdc-48.2, involved in the cytoplasmic elimination of misfolded proteins exported from the ER. This pathway, known as ERAD, prevents the activation of the unfolded protein response (UPR) caused by the accumulation of misfolded proteins in the ER. During S phase and in association with npl-4.1 and/or npl-4.2, cdc-48.1 and/or cdc-48.2 and ubxn-3, ensures the degradation of DNA licensing factor cdt-1 after the initiation of DNA replication and thus the disassembly of the DNA replication CMG helicase complex by promoting the dissociation from chromatin of several of its components including cdc-45 and sld-5. Regulates ubxn-3 nuclear localization during S phase. In Caenorhabditis elegans, this protein is Ubiquitin fusion degradation protein 1 homolog (ufd-1).